The primary structure comprises 1039 residues: Pleckstrin homology domain-containing family G member 5 (1039 aa).

Disordered regions lie at residues 58 to 105 (NVST…RRHT) and 185 to 277 (PGDE…SSES). Composition is skewed to basic and acidic residues over residues 185 to 199 (PGDE…KDSK) and 217 to 228 (ERVDPQSRRESS). Low complexity predominate over residues 259–277 (SSCSLPVGSSVGSSGSSES). The DH domain maps to 372-564 (HQQEAVWELL…ERFIHHVNTC (193 aa)). In terms of domain architecture, PH spans 620 to 720 (QLLLEGSLRM…WVDTLYNAQN (101 aa)). Disordered regions lie at residues 739–785 (QHLQ…ASDG) and 800–836 (TLSS…LLPL). Positions 744-757 (LEEEEDEQEEEGEE) are enriched in acidic residues. Polar residues-rich tracts occupy residues 758 to 776 (SGTS…SNSL) and 811 to 831 (FSSQ…TPTS). Position 760 is a phosphothreonine (Thr760). Position 765 is a phosphoserine (Ser765). A Phosphothreonine modification is found at Thr876. 3 positions are modified to phosphoserine: Ser878, Ser903, and Ser908. The tract at residues 967 to 989 (PLSESENRPSHKAGGPADSARRK) is disordered.

Interacts with GIPC1/synectin and RHOA. In terms of tissue distribution, selectively expressed in cortical and hippocampal neurons with prominent expression in the cell bodies and dendrites. Weakly expressed in rat fad pad ECs (RFPECs).

The protein resides in the cytoplasm. Its subcellular location is the perinuclear region. The protein localises to the cell membrane. It localises to the cell junction. It is found in the cell projection. The protein resides in the lamellipodium. In terms of biological role, functions as a guanine exchange factor (GEF) for RAB26 and thus regulates autophagy of synaptic vesicles in axon terminal of motoneurons. Involved in the control of neuronal cell differentiation. Plays a role in angiogenesis through regulation of endothelial cells chemotaxis. Also affects the migration, adhesion, and matrix/bone degradation in macrophages and osteoclasts. The chain is Pleckstrin homology domain-containing family G member 5 (Plekhg5) from Rattus norvegicus (Rat).